The chain runs to 91 residues: UPF0223 protein SAR1071 (91 aa).

This sequence belongs to the UPF0223 family.

In Staphylococcus aureus (strain MRSA252), this protein is UPF0223 protein SAR1071.